The following is a 431-amino-acid chain: Adenylosuccinate synthetase (431 aa).

GTP contacts are provided by residues 12-18 and 40-42; these read GDEGKGK and GHT. The Proton acceptor role is filled by aspartate 13. Residues aspartate 13 and glycine 40 each contribute to the Mg(2+) site. IMP is bound by residues 13 to 16, 38 to 41, threonine 130, arginine 144, glutamine 225, threonine 240, and arginine 304; these read DEGK and NAGH. Histidine 41 (proton donor) is an active-site residue. 300 to 306 is a binding site for substrate; it reads ATTGRPR. GTP is bound by residues arginine 306, 332 to 334, and 414 to 416; these read KLD and SVG.

Belongs to the adenylosuccinate synthetase family. As to quaternary structure, homodimer. Requires Mg(2+) as cofactor.

Its subcellular location is the cytoplasm. It carries out the reaction IMP + L-aspartate + GTP = N(6)-(1,2-dicarboxyethyl)-AMP + GDP + phosphate + 2 H(+). The protein operates within purine metabolism; AMP biosynthesis via de novo pathway; AMP from IMP: step 1/2. In terms of biological role, plays an important role in the de novo pathway of purine nucleotide biosynthesis. Catalyzes the first committed step in the biosynthesis of AMP from IMP. The chain is Adenylosuccinate synthetase from Geotalea daltonii (strain DSM 22248 / JCM 15807 / FRC-32) (Geobacter daltonii).